The following is a 502-amino-acid chain: MHIKPEEITSIIKNEIKNYEKELETVDSGTIIQIGDGVARVYGLEECMEGELLEFPNQVFGMALNLEQDNVGCVLLGSEEGIKEGDIVKRTGKIVEVPVGEDLIGRVVNSLGQPIDGKGPIKNDGYRAIEVPAPGILERSSVNEPLQTGIKAIDSMIPIGRGQRELIIGDRQTGKTAIAIDTIINQKGKDVICIYVAIGQKQSTVANIVNTLTEEGAMDYSIVVTASASESAPLQYIAPYSGCTMGEYFMNKGKHVLIIYDDLSKHAVAYRTMSLLIRRPPGREAYPGDVFYIHSRLLERAAKLSKENGGGSLTALPIIETLAGDVTAYIPTNVISITDGQIFLETELFNAGQRPAVNPGISVSRVGGNAQIKAMKQVSGTLRLELAQYRELASFAQFGSDLDKDTQARLEKGKRLIEILKQDQYKPMAVEKQIMIIYAAVNNFLLDIKVSDIKRFEKEFLEYMDTHHREIGKAILDKKVLDDELKSALESAIVEFKKIFLM.

169-176 (GDRQTGKT) serves as a coordination point for ATP.

This sequence belongs to the ATPase alpha/beta chains family. F-type ATPases have 2 components, CF(1) - the catalytic core - and CF(0) - the membrane proton channel. CF(1) has five subunits: alpha(3), beta(3), gamma(1), delta(1), epsilon(1). CF(0) has three main subunits: a(1), b(2) and c(9-12). The alpha and beta chains form an alternating ring which encloses part of the gamma chain. CF(1) is attached to CF(0) by a central stalk formed by the gamma and epsilon chains, while a peripheral stalk is formed by the delta and b chains.

Its subcellular location is the cell membrane. It carries out the reaction ATP + H2O + 4 H(+)(in) = ADP + phosphate + 5 H(+)(out). Its function is as follows. Produces ATP from ADP in the presence of a proton gradient across the membrane. The alpha chain is a regulatory subunit. The sequence is that of ATP synthase subunit alpha from Clostridium perfringens (strain ATCC 13124 / DSM 756 / JCM 1290 / NCIMB 6125 / NCTC 8237 / Type A).